A 127-amino-acid chain; its full sequence is Modulator protein MzrA (127 aa).

Topologically, residues 1 to 10 (MGLQNMTLRR) are cytoplasmic. A helical membrane pass occupies residues 11 to 31 (FTLSMSALLLLCALLWLWAAL). Residues 32-127 (EQQESSLAIR…RLRDAPHRLG (96 aa)) lie on the Periplasmic side of the membrane.

The protein belongs to the MzrA family. Interacts with EnvZ.

The protein localises to the cell inner membrane. Modulates the activity of the EnvZ/OmpR two-component regulatory system, probably by directly modulating EnvZ enzymatic activity and increasing stability of phosphorylated OmpR. This is Modulator protein MzrA from Enterobacter lignolyticus (strain SCF1).